We begin with the raw amino-acid sequence, 278 residues long: Bifunctional protein FolD (278 aa).

NADP(+) is bound by residues G164 to S166 and T228.

This sequence belongs to the tetrahydrofolate dehydrogenase/cyclohydrolase family. In terms of assembly, homodimer.

The enzyme catalyses (6R)-5,10-methylene-5,6,7,8-tetrahydrofolate + NADP(+) = (6R)-5,10-methenyltetrahydrofolate + NADPH. The catalysed reaction is (6R)-5,10-methenyltetrahydrofolate + H2O = (6R)-10-formyltetrahydrofolate + H(+). Its pathway is one-carbon metabolism; tetrahydrofolate interconversion. Catalyzes the oxidation of 5,10-methylenetetrahydrofolate to 5,10-methenyltetrahydrofolate and then the hydrolysis of 5,10-methenyltetrahydrofolate to 10-formyltetrahydrofolate. The polypeptide is Bifunctional protein FolD (Mycoplasmopsis synoviae (strain 53) (Mycoplasma synoviae)).